A 542-amino-acid chain; its full sequence is Probable quinate permease (542 aa).

Residues 1–22 (MSILALVEDRPTPKEVYNWKIY) lie on the Cytoplasmic side of the membrane. Residues 23–43 (LLAAVASFTSCMIGYDSAFIG) form a helical membrane-spanning segment. Topologically, residues 44–74 (TTLALSSFREEFGFSTMSKTAVNLVSANIVS) are extracellular. Residues 75–95 (CYQAGAFFGAFFAYPIGHFWG) form a helical membrane-spanning segment. Topologically, residues 96–97 (RK) are cytoplasmic. Residues 98–118 (WGLLFAGTIFTLGAGLMLGAN) traverse the membrane as a helical segment. Topologically, residues 119-130 (GDRGLGLLYGGR) are extracellular. A helical membrane pass occupies residues 131–151 (VLAGLGVGAGSNITPIYISEM). At 152–159 (APPSIRGR) the chain is on the cytoplasmic side. The chain crosses the membrane as a helical span at residues 160–180 (LVGVYELGWQIGGLVGFWINY). Over 181–193 (GVSETLAPSHKQW) the chain is Extracellular. Residues 194–214 (IIPFAVQLIPSGLLLIGAVFL) traverse the membrane as a helical segment. The Cytoplasmic segment spans residues 215 to 285 (KESPRWLFSR…AGTNKKVMYR (71 aa)). A helical transmembrane segment spans residues 286–306 (LFLGSMLFFWQNGSGINAINY). The Extracellular portion of the chain corresponds to 307–325 (YSPTVFKSIGLHGANTSMF). Residues 326–346 (STGIFGVVKTVVTFVWLLYLI) form a helical membrane-spanning segment. The Cytoplasmic portion of the chain corresponds to 347-352 (DRVGRR). Residues 353-373 (LLLLIGAAGAAVCLLIVGAYI) form a helical membrane-spanning segment. Over 374–387 (KIADPASNPTQEMT) the chain is Extracellular. Residues 388 to 408 (GGGIAAMFFFYLYTVFYTPSW) form a helical membrane-spanning segment. The Cytoplasmic portion of the chain corresponds to 409-456 (NGTPWVMNSEMFEPNMRSLAQACAAASNWLWNFLISRFTPQMFAKMEY). Residues 457–477 (GVWFFFASLMLLSIVFVFFLV) traverse the membrane as a helical segment. At 478 to 542 (PETKGIPLES…EHVSEDLPKV (65 aa)) the chain is on the extracellular side. The segment at 523–542 (GYSKTGEQQVEHVSEDLPKV) is disordered. Residues 531–542 (QVEHVSEDLPKV) show a composition bias toward basic and acidic residues.

It belongs to the major facilitator superfamily. Sugar transporter (TC 2.A.1.1) family. As to quaternary structure, interacts with creB. In terms of processing, ubiquitinated. Deubiquitinated by creB, probably to control its activity or amount.

The protein localises to the cell membrane. Functionally, integral membrane transporter that imports quinic acid to be catabolized as a carbon source. The sequence is that of Probable quinate permease (qutD) from Aspergillus fumigatus (strain ATCC MYA-4609 / CBS 101355 / FGSC A1100 / Af293) (Neosartorya fumigata).